A 505-amino-acid polypeptide reads, in one-letter code: Glutamate--cysteine ligase (505 aa).

The protein belongs to the glutamate--cysteine ligase type 1 family. Type 1 subfamily.

The enzyme catalyses L-cysteine + L-glutamate + ATP = gamma-L-glutamyl-L-cysteine + ADP + phosphate + H(+). Its pathway is sulfur metabolism; glutathione biosynthesis; glutathione from L-cysteine and L-glutamate: step 1/2. The protein is Glutamate--cysteine ligase of Wigglesworthia glossinidia brevipalpis.